The sequence spans 381 residues: Lipid-A-disaccharide synthase (381 aa).

Belongs to the LpxB family.

It catalyses the reaction a lipid X + a UDP-2-N,3-O-bis[(3R)-3-hydroxyacyl]-alpha-D-glucosamine = a lipid A disaccharide + UDP + H(+). Its pathway is bacterial outer membrane biogenesis; LPS lipid A biosynthesis. Functionally, condensation of UDP-2,3-diacylglucosamine and 2,3-diacylglucosamine-1-phosphate to form lipid A disaccharide, a precursor of lipid A, a phosphorylated glycolipid that anchors the lipopolysaccharide to the outer membrane of the cell. The chain is Lipid-A-disaccharide synthase from Rickettsia bellii (strain OSU 85-389).